A 138-amino-acid polypeptide reads, in one-letter code: Acidic phospholipase A2 Cvv-E6f (138 aa).

Positions 1–16 (MRTLWIVAVLLLGVEG) are cleaved as a signal peptide. Cystine bridges form between Cys42-Cys131, Cys44-Cys60, Cys59-Cys111, Cys65-Cys138, Cys66-Cys104, Cys73-Cys97, and Cys91-Cys102. Ca(2+) contacts are provided by Tyr43, Gly45, and Gly47. The active site involves His63. Asp64 is a binding site for Ca(2+). The active site involves Asp105.

Requires Ca(2+) as cofactor. In terms of tissue distribution, expressed by the venom gland.

The protein resides in the secreted. It catalyses the reaction a 1,2-diacyl-sn-glycero-3-phosphocholine + H2O = a 1-acyl-sn-glycero-3-phosphocholine + a fatty acid + H(+). Functionally, snake venom phospholipase A2 (PLA2) that shows very low inhibition of ADP-induced platelet aggregation in platelet-rich plasma of human, rabbit and guinea pig. In vivo, shows efficient edema-inducing activities in rat paws. PLA2 catalyzes the calcium-dependent hydrolysis of the 2-acyl groups in 3-sn-phosphoglycerides. The protein is Acidic phospholipase A2 Cvv-E6f of Crotalus viridis viridis (Prairie rattlesnake).